A 333-amino-acid polypeptide reads, in one-letter code: Atrochrysone carboxyl ACP thioesterase MYCFIDRAFT_190111 (333 aa).

Residues His-108, His-110, Asp-112, and His-113 each contribute to the Zn(2+) site. Asp-112 acts as the Proton donor/acceptor in catalysis.

It belongs to the metallo-beta-lactamase superfamily. Zn(2+) serves as cofactor.

The enzyme catalyses atrochrysone carboxyl-[ACP] + H2O = atrochrysone carboxylate + holo-[ACP] + H(+). It functions in the pathway secondary metabolite biosynthesis. Functionally, atrochrysone carboxyl ACP thioesterase; part of the gene cluster that mediates the biosynthesis of an emodin derivative that may be involved in black Sigatoka disease of banana. The pathway begins with the synthesis of atrochrysone thioester by the polyketide synthase PKS8-1. The atrochrysone carboxyl ACP thioesterase MYCFIDRAFT_190111 then breaks the thioester bond and releases the atrochrysone carboxylic acid from PKS8-1. The decarboxylase MYCFIDRAFT_34057 then catalyzes the concerted decarboxylation-elimination required to convert atochrysone carboxylic acid into emodin anthrone, which is further oxidized to emodin by the anthrone oxygenase MYCFIDRAFT_34418. The functions of the other tailoring enzymes as well as the final product of the cluster have still to be identified. This chain is Atrochrysone carboxyl ACP thioesterase MYCFIDRAFT_190111, found in Pseudocercospora fijiensis (strain CIRAD86) (Black leaf streak disease fungus).